The chain runs to 508 residues: NAD(P)H-quinone oxidoreductase subunit 2 B, chloroplastic (508 aa).

13 helical membrane-spanning segments follow: residues 24-44 (LLLF…GLIL), 59-79 (WLYF…LFRW), 99-119 (IFQF…VEYI), 124-144 (MAIT…MFLC), 149-169 (FITI…LSGY), 184-204 (LLMG…LYGL), 227-247 (PGIS…LSPA), 295-315 (WHLL…LIAI), 323-343 (MLAY…IVGD), 354-374 (YMLF…LFGL), 395-415 (ALSL…AGFF), 418-438 (LYLF…IGLL), and 482-502 (MIVC…IIAI).

This sequence belongs to the complex I subunit 2 family. As to quaternary structure, NDH is composed of at least 16 different subunits, 5 of which are encoded in the nucleus.

Its subcellular location is the plastid. The protein localises to the chloroplast thylakoid membrane. The catalysed reaction is a plastoquinone + NADH + (n+1) H(+)(in) = a plastoquinol + NAD(+) + n H(+)(out). The enzyme catalyses a plastoquinone + NADPH + (n+1) H(+)(in) = a plastoquinol + NADP(+) + n H(+)(out). NDH shuttles electrons from NAD(P)H:plastoquinone, via FMN and iron-sulfur (Fe-S) centers, to quinones in the photosynthetic chain and possibly in a chloroplast respiratory chain. The immediate electron acceptor for the enzyme in this species is believed to be plastoquinone. Couples the redox reaction to proton translocation, and thus conserves the redox energy in a proton gradient. The protein is NAD(P)H-quinone oxidoreductase subunit 2 B, chloroplastic of Ipomoea purpurea (Common morning glory).